A 167-amino-acid chain; its full sequence is 2-C-methyl-D-erythritol 2,4-cyclodiphosphate synthase (167 aa).

A divalent metal cation is bound by residues D8 and H10. 4-CDP-2-C-methyl-D-erythritol 2-phosphate contacts are provided by residues 8–10 (DIH) and 34–35 (HS). An a divalent metal cation-binding site is contributed by H42. 4-CDP-2-C-methyl-D-erythritol 2-phosphate is bound by residues 56–58 (DIG) and R142.

This sequence belongs to the IspF family. In terms of assembly, homotrimer. The cofactor is a divalent metal cation.

It catalyses the reaction 4-CDP-2-C-methyl-D-erythritol 2-phosphate = 2-C-methyl-D-erythritol 2,4-cyclic diphosphate + CMP. Its pathway is isoprenoid biosynthesis; isopentenyl diphosphate biosynthesis via DXP pathway; isopentenyl diphosphate from 1-deoxy-D-xylulose 5-phosphate: step 4/6. Its function is as follows. Involved in the biosynthesis of isopentenyl diphosphate (IPP) and dimethylallyl diphosphate (DMAPP), two major building blocks of isoprenoid compounds. Catalyzes the conversion of 4-diphosphocytidyl-2-C-methyl-D-erythritol 2-phosphate (CDP-ME2P) to 2-C-methyl-D-erythritol 2,4-cyclodiphosphate (ME-CPP) with a corresponding release of cytidine 5-monophosphate (CMP). This chain is 2-C-methyl-D-erythritol 2,4-cyclodiphosphate synthase, found in Buchnera aphidicola subsp. Schizaphis graminum (strain Sg).